A 248-amino-acid polypeptide reads, in one-letter code: Putative homeobox-leucine zipper protein HOX26 (248 aa).

Residues 50–118 form a disordered region; sequence KKVAAAAVVA…GDEEGASRKK (69 aa). The segment covering 79–89 has biased composition (basic residues); the sequence is RQRRSCKKGRR. A DNA-binding region (homeobox) is located at residues 114 to 173; sequence ASRKKLRLTGEQATLLEDSFRAHNILSHAEKQELAGKLGLSARQVEVWFQNRRARTKLKQ. The tract at residues 172-216 is leucine-zipper; it reads KQTEADCDLLRRWCDHLAADNARLRRDLAELRRSSSSPPVSGLAV.

It belongs to the HD-ZIP homeobox family. Class II subfamily.

Its subcellular location is the nucleus. Its function is as follows. Probable transcription factor. The protein is Putative homeobox-leucine zipper protein HOX26 (HOX26) of Oryza sativa subsp. japonica (Rice).